The following is a 379-amino-acid chain: Glucose-1-phosphate adenylyltransferase (379 aa).

Residues Gly-164, Glu-179–Lys-180, and Ser-190 contribute to the alpha-D-glucose 1-phosphate site.

It belongs to the bacterial/plant glucose-1-phosphate adenylyltransferase family. Homotetramer.

It catalyses the reaction alpha-D-glucose 1-phosphate + ATP + H(+) = ADP-alpha-D-glucose + diphosphate. The protein operates within glycan biosynthesis; glycogen biosynthesis. Its function is as follows. Involved in the biosynthesis of ADP-glucose, a building block required for the elongation reactions to produce glycogen. Catalyzes the reaction between ATP and alpha-D-glucose 1-phosphate (G1P) to produce pyrophosphate and ADP-Glc. The chain is Glucose-1-phosphate adenylyltransferase from Streptococcus uberis (strain ATCC BAA-854 / 0140J).